We begin with the raw amino-acid sequence, 199 residues long: Recombination protein RecR (199 aa).

A C4-type zinc finger spans residues 57 to 72 (CSICGNITEDDPCDIC). Positions 80–176 (KAVLVVEDSK…KVTRLAHGLS (97 aa)) constitute a Toprim domain.

It belongs to the RecR family.

May play a role in DNA repair. It seems to be involved in an RecBC-independent recombinational process of DNA repair. It may act with RecF and RecO. This Pediococcus pentosaceus (strain ATCC 25745 / CCUG 21536 / LMG 10740 / 183-1w) protein is Recombination protein RecR.